We begin with the raw amino-acid sequence, 526 residues long: Opine oxidase subunit A (526 aa).

Residues Cys-396, Cys-398, Cys-431, and Cys-436 each contribute to the [2Fe-2S] cluster site.

It to T-protein and to dimethylglycine dehydrogenase. In terms of assembly, heterodimer of a subunit A and a subunit B. [2Fe-2S] cluster is required as a cofactor.

It participates in opine metabolism; octopine degradation. Functionally, oxidative cleavage of octopine into L-arginine and pyruvate. The polypeptide is Opine oxidase subunit A (ooxA) (Rhizobium meliloti (Ensifer meliloti)).